The primary structure comprises 515 residues: Maturase K (515 aa).

Belongs to the intron maturase 2 family. MatK subfamily.

It localises to the plastid. Its subcellular location is the chloroplast. Its function is as follows. Usually encoded in the trnK tRNA gene intron. Probably assists in splicing its own and other chloroplast group II introns. This chain is Maturase K, found in Pinus pinea (Italian stone pine).